The primary structure comprises 444 residues: E3 ubiquitin-protein ligase APD2 (444 aa).

The segment covering 1–15 (MSLPDSLPSSSSSPP) has biased composition (low complexity). The tract at residues 1–41 (MSLPDSLPSSSSSPPVTREETGFHRFEHHGNDSGFDHRDRP) is disordered. The segment covering 17-41 (TREETGFHRFEHHGNDSGFDHRDRP) has biased composition (basic and acidic residues). Helical transmembrane passes span 74–94 (VVVV…GLYG) and 312–332 (IAYI…SSLF). Residues 393–432 (CAICYDAPRDCFFLSCGHCVACFQCGTRIAETSGFCPVCR) form an RING-type zinc finger.

As to quaternary structure, interacts with At1g78040, At1g10650, VHA-c4/AVAP4, VHA-c''2/VMA16 and TUFA. In terms of tissue distribution, expressed in the shoot apical meristems (SAM), root tips, pollen and inflorescences.

It localises to the endomembrane system. The catalysed reaction is S-ubiquitinyl-[E2 ubiquitin-conjugating enzyme]-L-cysteine + [acceptor protein]-L-lysine = [E2 ubiquitin-conjugating enzyme]-L-cysteine + N(6)-ubiquitinyl-[acceptor protein]-L-lysine.. It participates in protein modification; protein ubiquitination. Its function is as follows. Exhibits E2-dependent E3 ligase activity. Involved in pollen mitosis II (PMII) regulation during male gametogenesis. The chain is E3 ubiquitin-protein ligase APD2 from Arabidopsis thaliana (Mouse-ear cress).